The sequence spans 96 residues: MQKLIQGLGVGAGAALGVCVRLALTLWLGDSAWPILTINVLGAFLMGWLRPNAFWGTGFLGGFTTFSAMMLNDVSFYFFTAVGCILAWLAGDRLAR.

The next 2 helical transmembrane spans lie at 4–24 (LIQGLGVGAGAALGVCVRLAL) and 26–46 (LWLGDSAWPILTINVLGAFLM). Positions 61 and 64 each coordinate Na(+). A helical membrane pass occupies residues 69-89 (MMLNDVSFYFFTAVGCILAWL).

This sequence belongs to the fluoride channel Fluc/FEX (TC 1.A.43) family.

It is found in the cell membrane. The enzyme catalyses fluoride(in) = fluoride(out). With respect to regulation, na(+) is not transported, but it plays an essential structural role and its presence is essential for fluoride channel function. Functionally, fluoride-specific ion channel. Important for reducing fluoride concentration in the cell, thus reducing its toxicity. This chain is Fluoride-specific ion channel FluC 1, found in Corynebacterium glutamicum (strain ATCC 13032 / DSM 20300 / JCM 1318 / BCRC 11384 / CCUG 27702 / LMG 3730 / NBRC 12168 / NCIMB 10025 / NRRL B-2784 / 534).